The sequence spans 445 residues: Peptide chain release factor 1, mitochondrial (445 aa).

The transit peptide at 1-61 (MNRHLCVWLF…LLSKNWSRRY (61 aa)) directs the protein to the mitochondrion. A GGQ domain region spans residues 297 to 361 (PKDLRIDTFR…LRARLYQQII (65 aa)). A GGQ motif is present at residues 311-313 (GGQ). Q313 carries the N5-methylglutamine modification.

This sequence belongs to the prokaryotic/mitochondrial release factor family. Post-translationally, methylation of glutamine in the GGQ triplet by HEMK1 is conserved from bacteria to mammals.

It is found in the mitochondrion. Functionally, mitochondrial peptide chain release factor that directs the termination of translation in response to the peptide chain non-canonical stop codons AGG and AGA. Non-canonical termination codons AGG and AGA are found at the end of MT-CO1/COX1 and MT-ND6/ND6 open reading frames, respectively. Recognizes non-canonical stop codons via a network of interactions between the codon, MTRF1 and the ribosomal RNA (rRNA): in contrast to other translation release factors, which identify the codon in the A-site via direct interactions of amino acid side chains with the bases, MTRF1 repositions the first 2 bases of the stop codon to use an intricate network of interactions that includes residues of the release factor, the rRNA of the small ribosomal subunit, as well as neighboring bases of the mRNA. This chain is Peptide chain release factor 1, mitochondrial, found in Homo sapiens (Human).